The following is a 108-amino-acid chain: uncharacterized protein (108 aa).

Positions 20-74 constitute an HTH cro/C1-type domain; that stretch reads VRQRRTALILDQETLARRIGVSFQQIQKYERGRNRISASRLYDIAKALAVPIDYF. The segment at residues 31–50 is a DNA-binding region (H-T-H motif); that stretch reads QETLARRIGVSFQQIQKYER.

This is an uncharacterized protein from Rhodospirillum rubrum.